A 1164-amino-acid chain; its full sequence is Hamartin (1164 aa).

Lys30 participates in a covalent cross-link: Glycyl lysine isopeptide (Lys-Gly) (interchain with G-Cter in ubiquitin). The interval 403-787 is mediates interaction with WDR45B; sequence SDDYVHISLP…QIRQLQHDRE (385 aa). The tract at residues 439–571 is disordered; sequence LNDRGSEEPP…ADESPAGDRE (133 aa). The span at 474-487 shows a compositional bias: basic and acidic residues; the sequence is EKDKEEAAISRELS. Phosphoserine is present on residues Ser487, Ser505, Ser511, Ser521, and Ser598. Positions 513–530 are enriched in polar residues; that stretch reads PGSQRKTHSAASSSQGAS. Residues 721–997 adopt a coiled-coil conformation; the sequence is RKVIKAAALE…AAEERLDCCN (277 aa). The disordered stretch occupies residues 1006 to 1085; the sequence is GHNEEASGHN…TTVGSLPSSK (80 aa). Residues 1007 to 1020 show a composition bias toward basic and acidic residues; that stretch reads HNEEASGHNGETKT. A compositionally biased stretch (polar residues) spans 1073–1085; the sequence is SIPTTVGSLPSSK. Position 1100 is a phosphoserine (Ser1100). The segment at 1131–1164 is disordered; it reads IPLNLDGPHPSPPTPDSVGQLHIMDYNETHHEHS. The span at 1155–1164 shows a compositional bias: basic and acidic residues; that stretch reads DYNETHHEHS.

In terms of assembly, component of the TSC-TBC complex (also named Rhebulator complex), composed of 2 molecules of TSC1, 2 molecules of TSC2 and 1 molecule of TBC1D7. Probably forms a complex composed of chaperones HSP90 and HSP70, co-chaperones STIP1/HOP, CDC37, PPP5C, PTGES3/p23, TSC1 and client protein TSC2. Forms a complex composed of chaperones HSP90 and HSP70, co-chaperones CDC37, PPP5C, TSC1 and client protein TSC2, CDK4, AKT, RAF1 and NR3C1; this complex does not contain co-chaperones STIP1/HOP and PTGES3/p23. Forms a complex containing HSP90AA1, TSC1 and TSC2; TSC1 is required to recruit TCS2 to the complex. Interacts (via C-terminus) with the closed form of HSP90AA1 (via the middle domain and TPR repeat-binding motif). Interacts with DOCK7. Interacts with FBXW5. Interacts with WDR45B. Interacts with RPAP3 and URI1. Phosphorylation at Ser-505 does not affect interaction with TSC2. In terms of processing, 'Lys-63'-linked ubiquitinated at Lys-30 by PELI1; the ubiquitination promotes TSC1/TSC2 complex stability. As to expression, highly expressed in skeletal muscle, followed by heart, brain, placenta, pancreas, lung, liver and kidney. Also expressed in embryonic kidney cells.

Its subcellular location is the lysosome membrane. The protein resides in the cytoplasm. It is found in the cytosol. Non-catalytic component of the TSC-TBC complex, a multiprotein complex that acts as a negative regulator of the canonical mTORC1 complex, an evolutionarily conserved central nutrient sensor that stimulates anabolic reactions and macromolecule biosynthesis to promote cellular biomass generation and growth. The TSC-TBC complex acts as a GTPase-activating protein (GAP) for the small GTPase RHEB, a direct activator of the protein kinase activity of mTORC1. In absence of nutrients, the TSC-TBC complex inhibits mTORC1, thereby preventing phosphorylation of ribosomal protein S6 kinase (RPS6KB1 and RPS6KB2) and EIF4EBP1 (4E-BP1) by the mTORC1 signaling. The TSC-TBC complex is inactivated in response to nutrients, relieving inhibition of mTORC1. Within the TSC-TBC complex, TSC1 stabilizes TSC2 and prevents TSC2 self-aggregation. Acts as a tumor suppressor. Involved in microtubule-mediated protein transport via its ability to regulate mTORC1 signaling. Also acts as a co-chaperone for HSP90AA1 facilitating HSP90AA1 chaperoning of protein clients such as kinases, TSC2 and glucocorticoid receptor NR3C1. Increases ATP binding to HSP90AA1 and inhibits HSP90AA1 ATPase activity. Competes with the activating co-chaperone AHSA1 for binding to HSP90AA1, thereby providing a reciprocal regulatory mechanism for chaperoning of client proteins. Recruits TSC2 to HSP90AA1 and stabilizes TSC2 by preventing the interaction between TSC2 and ubiquitin ligase HERC1. This is Hamartin from Homo sapiens (Human).